A 507-amino-acid polypeptide reads, in one-letter code: Steroid (22S)-hydroxylase (507 aa).

The chain crosses the membrane as a helical span at residues 12–32 (LLFFLPYILLALLTFYTTTVA). Residue cysteine 444 coordinates heme.

It belongs to the cytochrome P450 family. The cofactor is heme.

The protein resides in the membrane. The catalysed reaction is a C27-steroid + reduced [NADPH--hemoprotein reductase] + O2 = a (22S)-22-hydroxy C27-steroid + oxidized [NADPH--hemoprotein reductase] + H2O + H(+). It carries out the reaction a C28-steroid + reduced [NADPH--hemoprotein reductase] + O2 = a (22S)-22-hydroxy C28-steroid + oxidized [NADPH--hemoprotein reductase] + H2O + H(+). The enzyme catalyses campesterol + reduced [NADPH--hemoprotein reductase] + O2 = (22S)-22-hydroxycampesterol + oxidized [NADPH--hemoprotein reductase] + H2O + H(+). It catalyses the reaction campestanol + reduced [NADPH--hemoprotein reductase] + O2 = 6-deoxycathasterone + oxidized [NADPH--hemoprotein reductase] + H2O + H(+). It functions in the pathway plant hormone biosynthesis; brassinosteroid biosynthesis. In terms of biological role, involved in reduction steps of the biosynthesis of plant campesterol-derivative steroids, ending to castasterone (CS) but missing brassinolide (BL). Catalyzes the conversion of campesterol (CR) to (22S)-22-hydroxycampesterol (22-OHCR, 22-hydroxyCR) and of campestanol (CN) to 6-deoxycathasterone (6-deoxoCT). The polypeptide is Steroid (22S)-hydroxylase (Brachypodium distachyon (Purple false brome)).